We begin with the raw amino-acid sequence, 287 residues long: Large ribosomal subunit protein uL2 (287 aa).

Residues 221-287 (RGSVMNPCDH…SKRSRGGRDS (67 aa)) are disordered. Residues 258–287 (KTRKKNKPSNKLVVRRRRRISKRSRGGRDS) are compositionally biased toward basic residues.

This sequence belongs to the universal ribosomal protein uL2 family. As to quaternary structure, part of the 50S ribosomal subunit. Forms a bridge to the 30S subunit in the 70S ribosome.

Its function is as follows. One of the primary rRNA binding proteins. Required for association of the 30S and 50S subunits to form the 70S ribosome, for tRNA binding and peptide bond formation. It has been suggested to have peptidyltransferase activity; this is somewhat controversial. Makes several contacts with the 16S rRNA in the 70S ribosome. The sequence is that of Large ribosomal subunit protein uL2 from Prochlorococcus marinus subsp. pastoris (strain CCMP1986 / NIES-2087 / MED4).